Reading from the N-terminus, the 426-residue chain is 3-phosphoshikimate 1-carboxyvinyltransferase (426 aa).

K22, S23, and R27 together coordinate 3-phosphoshikimate. K22 is a phosphoenolpyruvate binding site. G96 and R124 together coordinate phosphoenolpyruvate. 3-phosphoshikimate-binding residues include S170, S171, Q172, S198, D314, N337, and K341. A phosphoenolpyruvate-binding site is contributed by Q172. The active-site Proton acceptor is D314. R345, R387, and K412 together coordinate phosphoenolpyruvate.

This sequence belongs to the EPSP synthase family. As to quaternary structure, monomer.

Its subcellular location is the cytoplasm. The enzyme catalyses 3-phosphoshikimate + phosphoenolpyruvate = 5-O-(1-carboxyvinyl)-3-phosphoshikimate + phosphate. It functions in the pathway metabolic intermediate biosynthesis; chorismate biosynthesis; chorismate from D-erythrose 4-phosphate and phosphoenolpyruvate: step 6/7. Its function is as follows. Catalyzes the transfer of the enolpyruvyl moiety of phosphoenolpyruvate (PEP) to the 5-hydroxyl of shikimate-3-phosphate (S3P) to produce enolpyruvyl shikimate-3-phosphate and inorganic phosphate. This Shewanella baltica (strain OS155 / ATCC BAA-1091) protein is 3-phosphoshikimate 1-carboxyvinyltransferase.